The chain runs to 261 residues: 4-hydroxy-tetrahydrodipicolinate reductase (261 aa).

NAD(+)-binding positions include 13–18 (GMAGRM), 91–93 (GTS), and 115–118 (APNF). Residue H149 is the Proton donor/acceptor of the active site. H150 contacts (S)-2,3,4,5-tetrahydrodipicolinate. K153 functions as the Proton donor in the catalytic mechanism. 159 to 160 (GT) contributes to the (S)-2,3,4,5-tetrahydrodipicolinate binding site.

This sequence belongs to the DapB family.

It is found in the cytoplasm. The catalysed reaction is (S)-2,3,4,5-tetrahydrodipicolinate + NAD(+) + H2O = (2S,4S)-4-hydroxy-2,3,4,5-tetrahydrodipicolinate + NADH + H(+). The enzyme catalyses (S)-2,3,4,5-tetrahydrodipicolinate + NADP(+) + H2O = (2S,4S)-4-hydroxy-2,3,4,5-tetrahydrodipicolinate + NADPH + H(+). It functions in the pathway amino-acid biosynthesis; L-lysine biosynthesis via DAP pathway; (S)-tetrahydrodipicolinate from L-aspartate: step 4/4. Catalyzes the conversion of 4-hydroxy-tetrahydrodipicolinate (HTPA) to tetrahydrodipicolinate. The polypeptide is 4-hydroxy-tetrahydrodipicolinate reductase (Granulibacter bethesdensis (strain ATCC BAA-1260 / CGDNIH1)).